A 117-amino-acid polypeptide reads, in one-letter code: Ribonuclease P protein component (117 aa).

The protein belongs to the RnpA family. Consists of a catalytic RNA component (M1 or rnpB) and a protein subunit.

It carries out the reaction Endonucleolytic cleavage of RNA, removing 5'-extranucleotides from tRNA precursor.. In terms of biological role, RNaseP catalyzes the removal of the 5'-leader sequence from pre-tRNA to produce the mature 5'-terminus. It can also cleave other RNA substrates such as 4.5S RNA. The protein component plays an auxiliary but essential role in vivo by binding to the 5'-leader sequence and broadening the substrate specificity of the ribozyme. The chain is Ribonuclease P protein component from Nocardioides sp. (strain ATCC BAA-499 / JS614).